A 338-amino-acid chain; its full sequence is Glycerol-3-phosphate dehydrogenase [NAD(P)+] (338 aa).

NADPH contacts are provided by serine 13, tryptophan 14, and lysine 108. Positions 108, 139, and 141 each coordinate sn-glycerol 3-phosphate. Position 143 (alanine 143) interacts with NADPH. Lysine 194, aspartate 247, serine 257, arginine 258, and asparagine 259 together coordinate sn-glycerol 3-phosphate. Residue lysine 194 is the Proton acceptor of the active site. Arginine 258 is a binding site for NADPH. 2 residues coordinate NADPH: valine 282 and glutamate 284.

It belongs to the NAD-dependent glycerol-3-phosphate dehydrogenase family.

Its subcellular location is the cytoplasm. It catalyses the reaction sn-glycerol 3-phosphate + NAD(+) = dihydroxyacetone phosphate + NADH + H(+). It carries out the reaction sn-glycerol 3-phosphate + NADP(+) = dihydroxyacetone phosphate + NADPH + H(+). The protein operates within membrane lipid metabolism; glycerophospholipid metabolism. Its function is as follows. Catalyzes the reduction of the glycolytic intermediate dihydroxyacetone phosphate (DHAP) to sn-glycerol 3-phosphate (G3P), the key precursor for phospholipid synthesis. This Streptococcus pneumoniae (strain CGSP14) protein is Glycerol-3-phosphate dehydrogenase [NAD(P)+].